Consider the following 130-residue polypeptide: MSAATDQILDQLKSLSLLEAAELVKQIEEAFGVSAAAPAGGMMMMAAPGAAAAAEPVEEQTEFDVVLESVPADKKIAVLKIVREITGLGLKEAKDLVEAAPKAVKEAIAKDAAEDAKKRIEEAGGKVTVK.

The protein belongs to the bacterial ribosomal protein bL12 family. In terms of assembly, homodimer. Part of the ribosomal stalk of the 50S ribosomal subunit. Forms a multimeric L10(L12)X complex, where L10 forms an elongated spine to which 2 to 4 L12 dimers bind in a sequential fashion. Binds GTP-bound translation factors.

In terms of biological role, forms part of the ribosomal stalk which helps the ribosome interact with GTP-bound translation factors. Is thus essential for accurate translation. This chain is Large ribosomal subunit protein bL12, found in Nostoc sp. (strain PCC 7120 / SAG 25.82 / UTEX 2576).